The primary structure comprises 335 residues: Biotin synthase (335 aa).

Residues 46 to 274 form the Radical SAM core domain; that stretch reads YNIQLASLFS…KSKIRLSAGR (229 aa). Cys61, Cys65, and Cys68 together coordinate [4Fe-4S] cluster. The [2Fe-2S] cluster site is built by Cys105, Cys137, Cys197, and Arg269.

This sequence belongs to the radical SAM superfamily. Biotin synthase family. As to quaternary structure, homodimer. The cofactor is [4Fe-4S] cluster. It depends on [2Fe-2S] cluster as a cofactor.

The catalysed reaction is (4R,5S)-dethiobiotin + (sulfur carrier)-SH + 2 reduced [2Fe-2S]-[ferredoxin] + 2 S-adenosyl-L-methionine = (sulfur carrier)-H + biotin + 2 5'-deoxyadenosine + 2 L-methionine + 2 oxidized [2Fe-2S]-[ferredoxin]. Its pathway is cofactor biosynthesis; biotin biosynthesis; biotin from 7,8-diaminononanoate: step 2/2. Its function is as follows. Catalyzes the conversion of dethiobiotin (DTB) to biotin by the insertion of a sulfur atom into dethiobiotin via a radical-based mechanism. This Prochlorococcus marinus (strain AS9601) protein is Biotin synthase.